The following is a 447-amino-acid chain: Multicopper oxidase mco (447 aa).

Positions 1 to 25 (MMNMKEDKKNTMDMKNMKHHDERKK) are enriched in basic and acidic residues. Residues 1-28 (MMNMKEDKKNTMDMKNMKHHDERKKLNS) form a disordered region. Residues histidine 107, histidine 109, histidine 147, histidine 149, histidine 375, histidine 378, histidine 380, histidine 428, cysteine 429, histidine 430, histidine 434, and methionine 439 each contribute to the Cu cation site.

Belongs to the multicopper oxidase family. Cu cation serves as cofactor.

The protein localises to the cytoplasm. In terms of biological role, may be involved in copper homeostasis and oxidative stress response. The chain is Multicopper oxidase mco (mco) from Staphylococcus epidermidis (strain ATCC 12228 / FDA PCI 1200).